Here is a 387-residue protein sequence, read N- to C-terminus: Lymphocyte transmembrane adapter 1 (387 aa).

Over 1–37 (MDVTTSAWSETTRRISEPSTLQGTLGSLDKAEDHSSS) the chain is Extracellular. A helical; Signal-anchor for type III membrane protein membrane pass occupies residues 38 to 58 (IFSGFAALLAILLVVAVICVL). Topologically, residues 59–387 (WCCGKRKKRQ…VCAAEAGARG (329 aa)) are cytoplasmic. Positions 114-136 (VSTESLLSRNSDSPSSEHVPSRA) are disordered. Positions 118-129 (SLLSRNSDSPSS) are enriched in low complexity. Y195 carries the phosphotyrosine modification. The disordered stretch occupies residues 230-268 (SEEIDEGCGNASDCTSLGSPGTENSDPLSDGEGSSQTSN). A compositionally biased stretch (polar residues) spans 241-268 (SDCTSLGSPGTENSDPLSDGEGSSQTSN). 2 positions are modified to phosphotyrosine: Y270 and Y296. The interval 294–387 (RDYENVPPGP…VCAAEAGARG (94 aa)) is disordered. Over residues 319–329 (DHVEGRTDGPE) the composition is skewed to basic and acidic residues. Residues 360-369 (PWEDAEETSS) are compositionally biased toward acidic residues. The residue at position 375 (Y375) is a Phosphotyrosine.

When phosphorylated, interacts with GRB2, PIK3R1 and GRAP2. Phosphorylated on tyrosines upon TCR or BCR activation; which leads to the recruitment of GRB2, PIK3R1 and GRAP2.

It localises to the cell membrane. Negatively regulates TCR (T-cell antigen receptor)-mediated signaling in T-cells and BCR (B-cell antigen receptor)-mediated signaling in B-cells. This chain is Lymphocyte transmembrane adapter 1 (LAX1), found in Bos taurus (Bovine).